Reading from the N-terminus, the 240-residue chain is Competence protein ComFC (240 aa).

It belongs to the ComF/GntX family. Monomer and dimer in solution. Interacts with ComFA and DprA; ComFA-ComFC form rings about 150 Angstroms in diameter with apparent 6-fold symmetry.

Its function is as follows. Involved in transformation (genetic competence for DNA uptake). In Bacillus subtilis (strain 168), this protein is Competence protein ComFC (comFC).